A 1150-amino-acid polypeptide reads, in one-letter code: Cell division cycle and apoptosis regulator protein 1 (1150 aa).

The interval 1-249 is interaction with AR; that stretch reads MAQFGGQKNP…TQPQPQSLLQ (249 aa). Disordered stretches follow at residues 124-146 and 285-354; these read PTAQ…QPQK and IVSQ…SPRR. Positions 134-146 are enriched in low complexity; the sequence is TPRSSQQQTQPQK. Positions 203 to 660 are interaction with GATA2; the sequence is QRIQTLPNQN…RALSSKGLKS (458 aa). Basic and acidic residues-rich tracts occupy residues 293–334 and 341–352; these read RRLD…ERSP and ERSPRRERERSP. A Phosphoserine modification is found at Ser-456. The stretch at 594–618 forms a coiled coil; the sequence is KQQLVEKLQGERKEADGEQDEEEKD. The interval 600–638 is disordered; it reads KLQGERKEADGEQDEEEKDDGEAKEISTPTHWSKLDPKT. Residues 610-621 show a composition bias toward acidic residues; that stretch reads GEQDEEEKDDGE. Thr-627 carries the phosphothreonine modification. In terms of domain architecture, SAP spans 636-670; sequence PKTMKVNDLRKELESRALSSKGLKSQLIARLTKQL. Residue Lys-637 forms a Glycyl lysine isopeptide (Lys-Gly) (interchain with G-Cter in ubiquitin) linkage. Positions 643–1150 are interaction with GATA1; it reads DLRKELESRA…QKSKENGASV (508 aa). Position 667 is a phosphothreonine (Thr-667). Composition is skewed to basic and acidic residues over residues 673 to 687, 694 to 713, 796 to 817, and 832 to 855; these read EEQK…KSEK, DRKS…EEIE, KEDK…KKEE, and SGDD…KDDS. Disordered stretches follow at residues 673–713 and 796–915; these read EEQK…EEIE and KEDK…EKEK. Ser-685 and Ser-697 each carry phosphoserine. The span at 856–889 shows a compositional bias: acidic residues; it reads KDDDETEEDNNQDEYDPMEAEEAEDEEDDRDEEE. Position 861 is a phosphothreonine (Thr-861). A compositionally biased stretch (basic and acidic residues) spans 890-915; that stretch reads MTKRDDKRDINRYCKERPSKDKEKEK. Lys-1012 is covalently cross-linked (Glycyl lysine isopeptide (Lys-Gly) (interchain with G-Cter in SUMO1); alternate). Lys-1012 participates in a covalent cross-link: Glycyl lysine isopeptide (Lys-Gly) (interchain with G-Cter in SUMO2); alternate. Positions 1033-1114 form a coiled coil; that stretch reads DVGSLLQKLE…LQFENQMNKT (82 aa). Residues Lys-1067 and Lys-1135 each participate in a glycyl lysine isopeptide (Lys-Gly) (interchain with G-Cter in SUMO2) cross-link.

As to quaternary structure, directly interacts with ESR1, NR3C1 and p53/TP53. Interacts (via N-terminus) with CALCOCO1. Interacts with MED1. Interacts with GATA1. Interacts with AR and GATA2. Expressed in various epithelial cancer cell lines, including breast, colon, prostate, pancreatic and leukemia. Expression is regulated by growth factors.

It is found in the cytoplasm. Its subcellular location is the perinuclear region. In terms of biological role, associates with components of the Mediator and p160 coactivator complexes that play a role as intermediaries transducing regulatory signals from upstream transcriptional activator proteins to basal transcription machinery at the core promoter. Recruited to endogenous nuclear receptor target genes in response to the appropriate hormone. Also functions as a p53 coactivator. May thus play an important role in transcriptional regulation. May be involved in apoptosis signaling in the presence of the reinoid CD437. Apoptosis induction involves sequestration of 14-3-3 protein(s) and mediated altered expression of multiple cell cycle regulatory genes including MYC, CCNB1 and CDKN1A. Plays a role in cell cycle progression and/or cell proliferation. In association with CALCOCO1 enhances GATA1- and MED1-mediated transcriptional activation from the gamma-globin promoter during erythroid differentiation of K562 erythroleukemia cells. Can act as a both a coactivator and corepressor of AR-mediated transcription. Contributes to chromatin looping and AR transcription complex assembly by stabilizing AR-GATA2 association on chromatin and facilitating MED1 and RNA polymerase II recruitment to AR-binding sites. May play an important role in the growth and tumorigenesis of prostate cancer cells. This chain is Cell division cycle and apoptosis regulator protein 1 (CCAR1), found in Homo sapiens (Human).